Here is a 57-residue protein sequence, read N- to C-terminus: Large ribosomal subunit protein bL32 (57 aa).

Residues 1–16 (MAVQKSRKTPSRRGMR) show a composition bias toward basic residues. Positions 1 to 37 (MAVQKSRKTPSRRGMRRSHDALSTTAITVDETTGELH) are disordered. Positions 21 to 31 (ALSTTAITVDE) are enriched in polar residues.

It belongs to the bacterial ribosomal protein bL32 family.

This chain is Large ribosomal subunit protein bL32, found in Hydrogenovibrio crunogenus (strain DSM 25203 / XCL-2) (Thiomicrospira crunogena).